Reading from the N-terminus, the 535-residue chain is Peroxisomal membrane protein PEX29 (535 aa).

The next 2 helical transmembrane spans lie at 139–159 (LSVPFVLIDQVIIIFSWSKPL) and 176–196 (ILLLSLPFFYTCFEIIVPAYM). Asn239 carries an N-linked (GlcNAc...) asparagine glycan. A helical transmembrane segment spans residues 247–267 (MLLYVMSYDFVTSLIVKYLYF). Residue Asn271 is glycosylated (N-linked (GlcNAc...) asparagine). Transmembrane regions (helical) follow at residues 272-292 (ITIFIFVALLTSGTLLTLFGA) and 297-317 (AMLPFIKVTLSVGLWAATIAM). Residues Asn450 and Asn515 are each glycosylated (N-linked (GlcNAc...) asparagine). Residues 511–535 (AHRRNKSMESSNSLHPVKSIDSVDG) form a disordered region.

This sequence belongs to the PEX28-32 family. PEX29 subfamily.

It localises to the endoplasmic reticulum membrane. In terms of biological role, with PEX23, contributes to the formation of endoplasmic reticulum-mitochondria junctions which are important for mitochondrial function. Involved in lipid dropplets formation. In Ogataea parapolymorpha (strain ATCC 26012 / BCRC 20466 / JCM 22074 / NRRL Y-7560 / DL-1) (Yeast), this protein is Peroxisomal membrane protein PEX29.